A 413-amino-acid polypeptide reads, in one-letter code: Enhanced ethylene response protein 5 (413 aa).

The PCI domain occupies valine 216–proline 402.

Interacts with EIN2 (via C-terminus). May also interact weakly with CSN8. Interacts with DSS1(V), AMPD, SAC3A, SAC3B and At5g61290 (AC Q9FLK4). Interacts with UCH1 and UCH2. Interacts with NUP1, anchoring the TREX-2 complex on the nuclear pore complex. As to expression, expressed at low levels in roots, leaves, stems and shoots. Detected in seedlings, roots, leaves and anthers.

It is found in the nucleus. Involved in the regulation of ethylene response. Probable TREX-2 component required for nuclear RNA export. The TREX-2 complex (transcription and export complex 2) functions in docking export-competent ribonucleoprotein particles (mRNPs) to the nuclear entrance of the nuclear pore complex (nuclear basket). TREX-2 participates in mRNA export and accurate chromatin positioning in the nucleus by tethering genes to the nuclear periphery. The polypeptide is Enhanced ethylene response protein 5 (Arabidopsis thaliana (Mouse-ear cress)).